The following is a 95-amino-acid chain: Large ribosomal subunit protein bL25 (95 aa).

The protein belongs to the bacterial ribosomal protein bL25 family. Part of the 50S ribosomal subunit; part of the 5S rRNA/L5/L18/L25 subcomplex. Contacts the 5S rRNA. Binds to the 5S rRNA independently of L5 and L18.

In terms of biological role, this is one of the proteins that binds to the 5S RNA in the ribosome where it forms part of the central protuberance. The sequence is that of Large ribosomal subunit protein bL25 from Haemophilus ducreyi (strain 35000HP / ATCC 700724).